A 278-amino-acid polypeptide reads, in one-letter code: 2-succinyl-6-hydroxy-2,4-cyclohexadiene-1-carboxylate synthase (278 aa).

This sequence belongs to the AB hydrolase superfamily. MenH family. As to quaternary structure, monomer.

It carries out the reaction 5-enolpyruvoyl-6-hydroxy-2-succinyl-cyclohex-3-ene-1-carboxylate = (1R,6R)-6-hydroxy-2-succinyl-cyclohexa-2,4-diene-1-carboxylate + pyruvate. Its pathway is quinol/quinone metabolism; 1,4-dihydroxy-2-naphthoate biosynthesis; 1,4-dihydroxy-2-naphthoate from chorismate: step 3/7. The protein operates within quinol/quinone metabolism; menaquinone biosynthesis. Catalyzes a proton abstraction reaction that results in 2,5-elimination of pyruvate from 2-succinyl-5-enolpyruvyl-6-hydroxy-3-cyclohexene-1-carboxylate (SEPHCHC) and the formation of 2-succinyl-6-hydroxy-2,4-cyclohexadiene-1-carboxylate (SHCHC). The polypeptide is 2-succinyl-6-hydroxy-2,4-cyclohexadiene-1-carboxylate synthase (Photorhabdus laumondii subsp. laumondii (strain DSM 15139 / CIP 105565 / TT01) (Photorhabdus luminescens subsp. laumondii)).